The sequence spans 154 residues: Large ribosomal subunit protein uL13 (154 aa).

This sequence belongs to the universal ribosomal protein uL13 family. As to quaternary structure, part of the 50S ribosomal subunit.

Its function is as follows. This protein is one of the early assembly proteins of the 50S ribosomal subunit, although it is not seen to bind rRNA by itself. It is important during the early stages of 50S assembly. The chain is Large ribosomal subunit protein uL13 from Bradyrhizobium sp. (strain BTAi1 / ATCC BAA-1182).